The sequence spans 230 residues: 7-cyano-7-deazaguanine synthase (230 aa).

An ATP-binding site is contributed by 9–19 (ISGGLDSTTCL). Zn(2+)-binding residues include cysteine 192, cysteine 202, cysteine 205, and cysteine 208.

It belongs to the QueC family. Zn(2+) serves as cofactor.

The enzyme catalyses 7-carboxy-7-deazaguanine + NH4(+) + ATP = 7-cyano-7-deazaguanine + ADP + phosphate + H2O + H(+). It functions in the pathway purine metabolism; 7-cyano-7-deazaguanine biosynthesis. In terms of biological role, catalyzes the ATP-dependent conversion of 7-carboxy-7-deazaguanine (CDG) to 7-cyano-7-deazaguanine (preQ(0)). The protein is 7-cyano-7-deazaguanine synthase of Myxococcus xanthus (strain DK1622).